The chain runs to 180 residues: Chromatin structure-remodeling complex protein RSC14 (180 aa).

In terms of assembly, interacts with STH1, RSC3 and ARP9. Component of the two forms of the RSC complex composed of at least either RSC1 or RSC2, and ARP7, ARP9, LDB7, NPL6, RSC3, RSC30, RSC4, RSC58, RSC6, RSC8, RSC9, SFH1, STH1, HTL1 and probably RTT102. The complexes interact with histone and histone variant components of centromeric chromatin. Component of a fungal-specific module (HTL1-LDB7-NPL6-RSC3-RSC30) within the RSC complex.

It is found in the nucleus. Its function is as follows. Component of the chromatin structure-remodeling complex (RSC), which is involved in transcription regulation and nucleosome positioning. RSC is responsible for the transfer of a histone octamer from a nucleosome core particle to naked DNA. The reaction requires ATP and involves an activated RSC-nucleosome intermediate. Remodeling reaction also involves DNA translocation, DNA twist and conformational change. As a reconfigurer of centromeric and flanking nucleosomes, RSC complex is required both for proper kinetochore function in chromosome segregation and, via a PKC1-dependent signaling pathway, for organization of the cellular cytoskeleton. Together with HTL1, NPL6, RSC3, RSC30 components, defines a fungal-specific module within the RSC complex that plays a role in many cellular functions including the maintenance of cell wall integrity. May be involved in the transfer of mannosylphosphate (MP) groups into N-linked oligosaccharides. The protein is Chromatin structure-remodeling complex protein RSC14 (LDB7) of Saccharomyces cerevisiae (strain ATCC 204508 / S288c) (Baker's yeast).